The following is a 247-amino-acid chain: Protein ABHD14A (247 aa).

A helical; Signal-anchor for type II membrane protein membrane pass occupies residues 11 to 31; it reads AALLGLGLLLVFLLYMGLPGP. Asn43 is a glycosylation site (N-linked (GlcNAc...) asparagine). Catalysis depends on charge relay system residues Ser147, Asp198, and His225.

The protein belongs to the AB hydrolase superfamily. ABHD14 family. In terms of tissue distribution, widely expressed. Higher expression is detected in brain, kidney, heart, testis, ovary and uterus.

The protein localises to the cytoplasm. Its subcellular location is the membrane. Possible role in granule neuron development. This is Protein ABHD14A from Mus musculus (Mouse).